Here is a 98-residue protein sequence, read N- to C-terminus: Peptide YY (98 aa).

The signal sequence occupies residues 1 to 28 (MVAVRRPWPVTVAMLLILLACLGALVDA). Ser-41 is modified (phosphoserine). Tyr-64 is subject to Tyrosine amide. The propeptide occupies 68-98 (DVPAALFSKLLFTDDSDSENLPFRPEGLDQW).

Belongs to the NPY family. Post-translationally, the peptide YY form is cleaved at Pro-30 by the prolyl endopeptidase FAP (seprase) activity (in vitro) to generate peptide YY(3-36).

The protein resides in the secreted. This gut peptide inhibits exocrine pancreatic secretion, has a vasoconstrictory action and inhibitis jejunal and colonic mobility. The protein is Peptide YY (Pyy) of Mus musculus (Mouse).